The primary structure comprises 97 residues: Co-chaperonin GroES (97 aa).

This sequence belongs to the GroES chaperonin family. Heptamer of 7 subunits arranged in a ring. Interacts with the chaperonin GroEL.

The protein localises to the cytoplasm. Functionally, together with the chaperonin GroEL, plays an essential role in assisting protein folding. The GroEL-GroES system forms a nano-cage that allows encapsulation of the non-native substrate proteins and provides a physical environment optimized to promote and accelerate protein folding. GroES binds to the apical surface of the GroEL ring, thereby capping the opening of the GroEL channel. In Symbiobacterium thermophilum (strain DSM 24528 / JCM 14929 / IAM 14863 / T), this protein is Co-chaperonin GroES.